Consider the following 105-residue polypeptide: Small ribosomal subunit protein eS25 (105 aa).

Belongs to the eukaryotic ribosomal protein eS25 family. Component of the small ribosomal subunit. Mature ribosomes consist of a small (40S) and a large (60S) subunit. The 40S subunit contains about 32 different proteins and 1 molecule of RNA (18S). The 60S subunit contains 45 different proteins and 3 molecules of RNA (25S, 5.8S and 5S).

Its subcellular location is the cytoplasm. Functionally, component of the ribosome, a large ribonucleoprotein complex responsible for the synthesis of proteins in the cell. The small ribosomal subunit (SSU) binds messenger RNAs (mRNAs) and translates the encoded message by selecting cognate aminoacyl-transfer RNA (tRNA) molecules. The large subunit (LSU) contains the ribosomal catalytic site termed the peptidyl transferase center (PTC), which catalyzes the formation of peptide bonds, thereby polymerizing the amino acids delivered by tRNAs into a polypeptide chain. The nascent polypeptides leave the ribosome through a tunnel in the LSU and interact with protein factors that function in enzymatic processing, targeting, and the membrane insertion of nascent chains at the exit of the ribosomal tunnel. The polypeptide is Small ribosomal subunit protein eS25 (RPS25B) (Candida albicans (strain SC5314 / ATCC MYA-2876) (Yeast)).